The primary structure comprises 145 residues: Basic phospholipase A2 GL1-1 (145 aa).

The signal sequence occupies residues 1-21 (MYPAHLLVLLAVCVSLLGASA). Positions 22-27 (IPPLPL) are excised as a propeptide. 7 cysteine pairs are disulfide-bonded: cysteine 38/cysteine 98, cysteine 54/cysteine 144, cysteine 56/cysteine 72, cysteine 71/cysteine 125, cysteine 78/cysteine 118, cysteine 87/cysteine 111, and cysteine 105/cysteine 116. Ca(2+) is bound by residues tyrosine 55, glycine 57, and glycine 59. The active site involves histidine 75. Residue aspartate 76 coordinates Ca(2+). Residue aspartate 119 is part of the active site.

This sequence belongs to the phospholipase A2 family. Group I subfamily. D49 sub-subfamily. Ca(2+) serves as cofactor. In terms of tissue distribution, expressed by the venom gland.

It localises to the secreted. The enzyme catalyses a 1,2-diacyl-sn-glycero-3-phosphocholine + H2O = a 1-acyl-sn-glycero-3-phosphocholine + a fatty acid + H(+). PLA2 catalyzes the calcium-dependent hydrolysis of the 2-acyl groups in 3-sn-phosphoglycerides. In Laticauda semifasciata (Black-banded sea krait), this protein is Basic phospholipase A2 GL1-1.